The sequence spans 481 residues: Aspartyl/glutamyl-tRNA(Asn/Gln) amidotransferase subunit B (481 aa).

Belongs to the GatB/GatE family. GatB subfamily. Heterotrimer of A, B and C subunits.

It carries out the reaction L-glutamyl-tRNA(Gln) + L-glutamine + ATP + H2O = L-glutaminyl-tRNA(Gln) + L-glutamate + ADP + phosphate + H(+). It catalyses the reaction L-aspartyl-tRNA(Asn) + L-glutamine + ATP + H2O = L-asparaginyl-tRNA(Asn) + L-glutamate + ADP + phosphate + 2 H(+). Its function is as follows. Allows the formation of correctly charged Asn-tRNA(Asn) or Gln-tRNA(Gln) through the transamidation of misacylated Asp-tRNA(Asn) or Glu-tRNA(Gln) in organisms which lack either or both of asparaginyl-tRNA or glutaminyl-tRNA synthetases. The reaction takes place in the presence of glutamine and ATP through an activated phospho-Asp-tRNA(Asn) or phospho-Glu-tRNA(Gln). The protein is Aspartyl/glutamyl-tRNA(Asn/Gln) amidotransferase subunit B of Teredinibacter turnerae (strain ATCC 39867 / T7901).